The sequence spans 230 residues: Cytidylate kinase (230 aa).

Residue 12–20 (GPSGAGKGT) coordinates ATP.

This sequence belongs to the cytidylate kinase family. Type 1 subfamily.

The protein resides in the cytoplasm. It carries out the reaction CMP + ATP = CDP + ADP. The enzyme catalyses dCMP + ATP = dCDP + ADP. The polypeptide is Cytidylate kinase (Shewanella pealeana (strain ATCC 700345 / ANG-SQ1)).